Here is a 478-residue protein sequence, read N- to C-terminus: Lysine histidine transporter-like 7 (478 aa).

Residues 1 to 63 (MSIALGNLFD…ITESRKGNVY (63 aa)) lie on the Cytoplasmic side of the membrane. The interval 15 to 45 (ESGGSPLFMSPAPSTDPQPISGEKNGGDGGR) is disordered. A helical transmembrane segment spans residues 64–86 (TATFHLLCSGIGLQVILLPAAFA). The Extracellular segment spans residues 87–89 (ALG). Residues 90–112 (WVWGTIILTVGFVWKLYTTWLLV) traverse the membrane as a helical segment. The Cytoplasmic portion of the chain corresponds to 113–140 (QLHEAVPGIRISRYVRLAIASFGVKLGK). Residues 141–161 (LLGIFPVMYLSGGACTILVIT) form a helical membrane-spanning segment. Over 162 to 177 (GGKSIQQLLQIMSDDN) the chain is Extracellular. Residues 178–198 (TAPLTSVQCFLVFSCIAMIMS) form a helical membrane-spanning segment. Topologically, residues 199 to 205 (QFPNLNS) are cytoplasmic. Residues 206-226 (LFGVSLIGAFMGIAYCTVIWI) traverse the membrane as a helical segment. The Extracellular portion of the chain corresponds to 227–241 (LPVASDSQRTQVSVS). A helical membrane pass occupies residues 242 to 262 (YATMDKSFVHIFNAIGLIALV). At 263 to 291 (YRGNNLVLEIQGTLPSDSKNPSCKTMWRA) the chain is on the cytoplasmic side. A helical membrane pass occupies residues 292–312 (VMISHALVAICMFPLTFAVYW). Over 313–340 (AYGDKIPATGGPVGNYLKLYTQEHSKRA) the chain is Extracellular. A helical membrane pass occupies residues 341-361 (ACFIHLTFIFSCLCSYPINLM). Topologically, residues 362–379 (PACDNIEMVYITKKKKPA) are cytoplasmic. A helical transmembrane segment spans residues 380–402 (SIIVRMMLRVFLSLVCFTIAVGF). Topologically, residues 403–406 (PFLP) are extracellular. Residues 407–429 (YLAVLIGAIALLVTFTYPCFMWI) traverse the membrane as a helical segment. Over 430–439 (SIKKPQRKSP) the chain is Cytoplasmic. A helical transmembrane segment spans residues 440-460 (MWLFNVLVGCLGASLSVLLLV). Topologically, residues 461 to 478 (ASAMRLAQKGLHANFFRP) are extracellular.

It belongs to the amino acid/polyamine transporter 2 family. Amino acid/auxin permease (AAAP) (TC 2.A.18.2) subfamily.

It is found in the cell membrane. In terms of biological role, amino acid transporter. The sequence is that of Lysine histidine transporter-like 7 from Arabidopsis thaliana (Mouse-ear cress).